The following is an 85-amino-acid chain: Protein RnfH (85 aa).

Belongs to the UPF0125 (RnfH) family.

In Cereibacter sphaeroides (strain ATCC 17029 / ATH 2.4.9) (Rhodobacter sphaeroides), this protein is Protein RnfH.